Here is a 200-residue protein sequence, read N- to C-terminus: uncharacterized protein (200 aa).

A helical membrane pass occupies residues 7-29 (FFFLFSFISHAMMLTGLIGSSSF).

It localises to the membrane. This is an uncharacterized protein from Saccharomyces cerevisiae (strain ATCC 204508 / S288c) (Baker's yeast).